The primary structure comprises 407 residues: E3 ubiquitin-protein ligase TRIM13 (407 aa).

The segment at 10 to 58 (CPICCSLFDDPRVLPCSHNFCKKCLEGILEGSVRNSLWRPAPFKCPTCR) adopts an RING-type zinc-finger fold. The segment at 89–131 (PKMPVCKGHLGQPLNIFCLTDMQLICGICATRGEHTKHVFCSI) adopts a B box-type zinc-finger fold. 4 residues coordinate Zn(2+): C94, H97, C117, and H123. Residues 172 to 200 (LQLLTKDSDKVKEFFEKLQHTLDQKKNEI) adopt a coiled-coil conformation. Residues 317-337 (LFLLILLLGLVIVFGPTMFLE) form a helical membrane-spanning segment.

The protein belongs to the TRIM/RBCC family. As to quaternary structure, interacts (via C-terminal domain) with VCP. Interacts with AKT1; the interaction ubiquitinates AKT1 and leads to its proteasomal degradation. Interacts with MDM2; the interaction ubiquitinates AKT1 and leads to its proteasomal degradation. Interacts with p62/SQSTM1. Interacts with TRAF6. Interacts with IKBKG/NEMO. In terms of processing, auto-ubiquitinated; requires the RING-type zinc finger. Auto-polyubiquitination leads to proteasomal degradation.

The protein localises to the endoplasmic reticulum membrane. It catalyses the reaction S-ubiquitinyl-[E2 ubiquitin-conjugating enzyme]-L-cysteine + [acceptor protein]-L-lysine = [E2 ubiquitin-conjugating enzyme]-L-cysteine + N(6)-ubiquitinyl-[acceptor protein]-L-lysine.. It participates in protein modification; protein ubiquitination. In terms of biological role, endoplasmic reticulum (ER) membrane anchored E3 ligase involved in the retrotranslocation and turnover of membrane and secretory proteins from the ER through a set of processes named ER-associated degradation (ERAD). This process acts on misfolded proteins as well as in the regulated degradation of correctly folded proteins. Enhances ionizing radiation-induced p53/TP53 stability and apoptosis via ubiquitinating MDM2 and AKT1 and decreasing AKT1 kinase activity through MDM2 and AKT1 proteasomal degradation. Regulates ER stress-induced autophagy, and may act as a tumor suppressor. Also plays a role in innate immune response by stimulating NF-kappa-B activity in the TLR2 signaling pathway. Ubiquitinates TRAF6 via the 'Lys-29'-linked polyubiquitination chain resulting in NF-kappa-B activation. Participates as well in T-cell receptor-mediated NF-kappa-B activation. In the presence of TNF, modulates the IKK complex by regulating IKBKG/NEMO ubiquitination leading to the repression of NF-kappa-B. This chain is E3 ubiquitin-protein ligase TRIM13 (TRIM13), found in Homo sapiens (Human).